The following is a 408-amino-acid chain: UPF0761 membrane protein NMCC_0461 (408 aa).

6 helical membrane passes run 43-63 (LLALVPVLTVMVAVASIFPVF), 100-120 (LTAIGSVMLVVTSLMLIRTID), 139-159 (FLVYWALLTFGPLSLGVGISF), 176-196 (WSGALRTAATLTFMTLLLWGL), 210-230 (AFVGALATAFCLETARSLFTW), and 248-268 (VPFFLLWLNLLWTLVLGGAVL).

Belongs to the UPF0761 family.

It localises to the cell inner membrane. The polypeptide is UPF0761 membrane protein NMCC_0461 (Neisseria meningitidis serogroup C (strain 053442)).